Consider the following 1284-residue polypeptide: ABC multidrug transporter atrC (1284 aa).

The segment covering 1–11 (MKSTAESKETP) has biased composition (basic and acidic residues). Residues 1 to 24 (MKSTAESKETPSQDESTTSVPCTE) form a disordered region. A run of 6 helical transmembrane segments spans residues 55-75 (AVAI…NLIF), 99-119 (AAEL…LSYT), 178-198 (IGLL…AFVV), 203-223 (TLIC…VAAV), 282-302 (LLGL…GLAF), and 320-340 (IFTV…LAPY). Residues 55 to 346 (AVAILAACAS…LAPYSIEFSR (292 aa)) enclose the ABC transmembrane type-1 1 domain. One can recognise an ABC transporter 1 domain in the interval 381-626 (VELENVTFSY…DGVYAGLVKI (246 aa)). Residues asparagine 385 and asparagine 401 are each glycosylated (N-linked (GlcNAc...) asparagine). 416–423 (GQSGSGKS) is an ATP binding site. N-linked (GlcNAc...) asparagine glycans are attached at residues asparagine 488 and asparagine 632. The next 2 membrane-spanning stretches (helical) occupy residues 705 to 725 (LVVL…AILM) and 745 to 765 (FYAS…LAVG). One can recognise an ABC transmembrane type-1 2 domain in the interval 705–992 (LVVLLGCLGG…LFQWSTSITK (288 aa)). N-linked (GlcNAc...) asparagine glycosylation occurs at asparagine 800. The next 4 helical transmembrane spans lie at 824-844 (IALV…AIAF), 846-866 (WKLG…AGMV), 931-951 (MICF…GFWY), and 955-975 (LVSL…SVFF). The N-linked (GlcNAc...) asparagine glycan is linked to asparagine 995. The ABC transporter 2 domain maps to 1027–1280 (IAMDNVRFSY…GGLYRRMCEA (254 aa)). Residue 1062-1069 (GSSGCGKS) coordinates ATP. Asparagine 1122 is a glycosylation site (N-linked (GlcNAc...) asparagine).

This sequence belongs to the ABC transporter superfamily. ABCB family. Multidrug resistance exporter (TC 3.A.1.201) subfamily.

Its subcellular location is the cell membrane. Its function is as follows. Pleiotropic ABC efflux transporter involved in the protection of the cells against a wide range of toxic compounds. This Emericella nidulans (strain FGSC A4 / ATCC 38163 / CBS 112.46 / NRRL 194 / M139) (Aspergillus nidulans) protein is ABC multidrug transporter atrC.